A 175-amino-acid polypeptide reads, in one-letter code: Alkyl hydroperoxide reductase AhpD (175 aa).

Cys-130 acts as the Proton donor in catalysis. A disulfide bridge links Cys-130 with Cys-133. The Cysteine sulfenic acid (-SOH) intermediate role is filled by Cys-133.

The protein belongs to the AhpD family. As to quaternary structure, homotrimer.

The enzyme catalyses N(6)-[(R)-dihydrolipoyl]-L-lysyl-[lipoyl-carrier protein] + a hydroperoxide = N(6)-[(R)-lipoyl]-L-lysyl-[lipoyl-carrier protein] + an alcohol + H2O. Functionally, antioxidant protein with alkyl hydroperoxidase activity. Required for the reduction of the AhpC active site cysteine residues and for the regeneration of the AhpC enzyme activity. This chain is Alkyl hydroperoxide reductase AhpD, found in Mycobacteroides abscessus (strain ATCC 19977 / DSM 44196 / CCUG 20993 / CIP 104536 / JCM 13569 / NCTC 13031 / TMC 1543 / L948) (Mycobacterium abscessus).